A 132-amino-acid chain; its full sequence is D-ribose pyranase (132 aa).

Residue H20 is the Proton donor of the active site. Substrate is bound by residues D28, H99, and 121–123 (YSN).

It belongs to the RbsD / FucU family. RbsD subfamily. Homodecamer.

It localises to the cytoplasm. The enzyme catalyses beta-D-ribopyranose = beta-D-ribofuranose. The protein operates within carbohydrate metabolism; D-ribose degradation; D-ribose 5-phosphate from beta-D-ribopyranose: step 1/2. Catalyzes the interconversion of beta-pyran and beta-furan forms of D-ribose. This chain is D-ribose pyranase, found in Pseudomonas putida (strain ATCC 47054 / DSM 6125 / CFBP 8728 / NCIMB 11950 / KT2440).